The primary structure comprises 903 residues: DNA gyrase subunit A (903 aa).

In terms of domain architecture, Topo IIA-type catalytic spans 36–499 (LPDARDGFKP…AIDDSDDEDL (464 aa)). The O-(5'-phospho-DNA)-tyrosine intermediate role is filled by Y124. Residues 526-532 (QNRGGKG) carry the GyrA-box motif. The segment covering 881-895 (VDDDSVVKDDAEKQE) has biased composition (basic and acidic residues). The segment at 881–903 (VDDDSVVKDDAEKQEIGPTETEE) is disordered.

The protein belongs to the type II topoisomerase GyrA/ParC subunit family. As to quaternary structure, heterotetramer, composed of two GyrA and two GyrB chains. In the heterotetramer, GyrA contains the active site tyrosine that forms a transient covalent intermediate with DNA, while GyrB binds cofactors and catalyzes ATP hydrolysis.

Its subcellular location is the cytoplasm. The catalysed reaction is ATP-dependent breakage, passage and rejoining of double-stranded DNA.. A type II topoisomerase that negatively supercoils closed circular double-stranded (ds) DNA in an ATP-dependent manner to modulate DNA topology and maintain chromosomes in an underwound state. Negative supercoiling favors strand separation, and DNA replication, transcription, recombination and repair, all of which involve strand separation. Also able to catalyze the interconversion of other topological isomers of dsDNA rings, including catenanes and knotted rings. Type II topoisomerases break and join 2 DNA strands simultaneously in an ATP-dependent manner. This chain is DNA gyrase subunit A, found in Fibrobacter succinogenes (strain ATCC 19169 / S85).